The primary structure comprises 229 residues: Aminopyrimidine aminohydrolase (229 aa).

Aspartate 44 serves as a coordination point for substrate. Cysteine 137 (nucleophile) is an active-site residue. 2 residues coordinate substrate: tyrosine 141 and tyrosine 167. Catalysis depends on glutamate 208, which acts as the Proton donor.

The protein belongs to the TenA family. As to quaternary structure, homotetramer.

The catalysed reaction is 4-amino-5-aminomethyl-2-methylpyrimidine + H2O = 4-amino-5-hydroxymethyl-2-methylpyrimidine + NH4(+). It carries out the reaction thiamine + H2O = 5-(2-hydroxyethyl)-4-methylthiazole + 4-amino-5-hydroxymethyl-2-methylpyrimidine + H(+). The protein operates within cofactor biosynthesis; thiamine diphosphate biosynthesis. In terms of biological role, catalyzes an amino-pyrimidine hydrolysis reaction at the C5' of the pyrimidine moiety of thiamine compounds, a reaction that is part of a thiamine salvage pathway. Thus, catalyzes the conversion of 4-amino-5-aminomethyl-2-methylpyrimidine to 4-amino-5-hydroxymethyl-2-methylpyrimidine (HMP). Is also able to catalyze the hydrolytic cleavage of thiamine; however, this thiaminase activity may not be physiologically relevant. Therefore, is probably involved in the regeneration of the thiamine pyrimidine from thiamine degraded products present in the environment, rather than in thiamine degradation. The sequence is that of Aminopyrimidine aminohydrolase from Staphylococcus aureus (strain MRSA252).